The primary structure comprises 835 residues: Pre-mRNA-processing protein 40C (835 aa).

The segment covering 1-20 (MEGENTTDPPYTTAASSGQS) has biased composition (polar residues). The segment at 1 to 22 (MEGENTTDPPYTTAASSGQSIF) is disordered. WW domains are found at residues 243-276 (GNRL…KPPG) and 295-328 (SLPG…IPAE). The disordered stretch occupies residues 397-459 (SGMPVSSTIT…DSGPSKEECS (63 aa)). Over residues 400–428 (PVSSTITSEANSGKTTEVTPSGESGNSTG) the composition is skewed to polar residues. FF domains lie at 455–509 (KEEC…YVKT), 519–577 (RAAH…RVLS), and 590–643 (RAAA…YIAE). Disordered stretches follow at residues 649–677 (RGDD…RKER) and 714–738 (TESK…PADK). 2 FF domains span residues 691 to 748 (RKEA…HVKS) and 750 to 815 (YERC…YVED).

This sequence belongs to the PRPF40 family. In terms of assembly, interacts (via the WW domains) with the phosphorylated C-terminal domain of NRPB1 (via CTD domain). In terms of tissue distribution, expressed in roots, shoots, rosette leaves, cauline leaves, stems and flowers.

The protein localises to the nucleus. Its function is as follows. Binds the phosphorylated C-terminal domain (CTD) of the largest subunit of RNA polymerase II and functions as a scaffold for RNA processing machineries. May be involved in pre-mRNA splicing. This Arabidopsis thaliana (Mouse-ear cress) protein is Pre-mRNA-processing protein 40C.